Consider the following 529-residue polypeptide: MSSGLIYISLEVLVACLITALVMYYVMKKIYYARGQATLKSASAKAKLMEFQAKSFVEAEEIRMKSQECKLQQQYENKNLQLQTHFDKKEAHLKHLEAQHKEFVRDEKRYLEKEKKELEKERQILEQEKENFKKQRAVCKESQAKALDAMLNYMAYTKDEIKSMILEQLEEELEAQKSALIRRYEKEAKEEGKKKSYAILAEATARFAGNYAAENLTTRIALPCSDYIGRVIGKDGKNIEAFKKVSGVDIEFSEDSSELCLSSFNLYRREVASETLKILIEDGRIQPNRIEEVYHRVARNLEKELLSEGESVVLELELGAMEDELKILIGKMRYRSSFGQNALQHSKEVALLAGLIAEQLGGDKKLARRAGILHDIGKALTQELGRDHVNLGVEVCKRHKEDPVVINAIYAHHGHEEILSVECASVCAADALSAGRPGARRKSDEEYAKRMQALEEIALEFDGVEKAYAMESGRELRVIVKSNQVRDNQVPIIARKIAKKIEESAQYVGEVGVQVVRESRFKTTATLKQ.

Residues 4–24 (GLIYISLEVLVACLITALVMY) form a helical membrane-spanning segment. Residues 216–297 (LTTRIALPCS…NRIEEVYHRV (82 aa)) enclose the KH domain. The HD domain occupies 342–435 (ALQHSKEVAL…VCAADALSAG (94 aa)).

It belongs to the RNase Y family.

It localises to the cell membrane. Its function is as follows. Endoribonuclease that initiates mRNA decay. In Helicobacter pylori (strain ATCC 700392 / 26695) (Campylobacter pylori), this protein is Ribonuclease Y.